The primary structure comprises 97 residues: MPTSHGERSCTRYKLKKTVRERGLSPISKAIQDFEEGQMVHIDIDPSVQKGMPNAKFQGKTGKVLGKRGRAYLLQVTDGNSKKEVISLSQHLKPQKY.

It belongs to the eukaryotic ribosomal protein eL21 family.

The sequence is that of Large ribosomal subunit protein eL21 from Methanococcoides burtonii (strain DSM 6242 / NBRC 107633 / OCM 468 / ACE-M).